The following is a 570-amino-acid chain: Sulfite reductase [NADPH] hemoprotein beta-component (570 aa).

[4Fe-4S] cluster-binding residues include C434, C440, C479, and C483. C483 lines the siroheme pocket.

It belongs to the nitrite and sulfite reductase 4Fe-4S domain family. As to quaternary structure, alpha(8)-beta(8). The alpha component is a flavoprotein, the beta component is a hemoprotein. Siroheme is required as a cofactor. The cofactor is [4Fe-4S] cluster.

It carries out the reaction hydrogen sulfide + 3 NADP(+) + 3 H2O = sulfite + 3 NADPH + 4 H(+). It functions in the pathway sulfur metabolism; hydrogen sulfide biosynthesis; hydrogen sulfide from sulfite (NADPH route): step 1/1. Its function is as follows. Component of the sulfite reductase complex that catalyzes the 6-electron reduction of sulfite to sulfide. This is one of several activities required for the biosynthesis of L-cysteine from sulfate. This Salmonella paratyphi A (strain ATCC 9150 / SARB42) protein is Sulfite reductase [NADPH] hemoprotein beta-component.